Consider the following 89-residue polypeptide: MQTVLIALLRFYKLAVSPLLGSRCRFYPSCSDYAREAIQYHGAARGTYLAARRLCRCHPFSAGGIDLVPPPNSDARNAPHEAEASSHRL.

A disordered region spans residues 68-89 (VPPPNSDARNAPHEAEASSHRL). Positions 77-89 (NAPHEAEASSHRL) are enriched in basic and acidic residues.

Belongs to the UPF0161 family.

It localises to the cell inner membrane. Its function is as follows. Could be involved in insertion of integral membrane proteins into the membrane. The sequence is that of Putative membrane protein insertion efficiency factor from Burkholderia thailandensis (strain ATCC 700388 / DSM 13276 / CCUG 48851 / CIP 106301 / E264).